The chain runs to 352 residues: Glucose-6-phosphatase catalytic subunit 1 (352 aa).

Residues 1–27 (MDLLHSWGVELAVYLQTRYGKYEGLFD) are Lumenal-facing. A helical transmembrane segment spans residues 28–48 (LASTVADLHTTFFWLFPIWFH). Over 49–56 (LRRDTALR) the chain is Cytoplasmic. A helical membrane pass occupies residues 57-77 (LIWVAVIGDWLNLVLKWVLFG). The Lumenal portion of the chain corresponds to 78–113 (ERPYWWVHETKFYGAGPAPSLQQFPITCETGPGSPS). Arg79 lines the substrate pocket. Residues 114-134 (GHAMGAAGVWYVMVTALLSIA) traverse the membrane as a helical segment. His115 serves as the catalytic Proton donor. Over 135 to 141 (REKQCPP) the chain is Cytoplasmic. A helical transmembrane segment spans residues 142–162 (LLYRFLYIGLWMLMGLVELVV). The Lumenal segment spans residues 163–166 (CISR). Substrate is bound at residue Arg166. A helical transmembrane segment spans residues 167–187 (VYMAAHFPHQVIAGIITGTLV). The Nucleophile role is filled by His172. Over 188 to 205 (AEVVSKEKWIYSASLKKY) the chain is Cytoplasmic. The helical transmembrane segment at 206-226 (FLITLFLTSFAVGFYVLLKAL) threads the bilayer. The Lumenal segment spans residues 227 to 256 (DVDLLWTMEKAQKWCIRPEWVHLDSAPFAS). The chain crosses the membrane as a helical span at residues 257–276 (LLRNMGSLFGLGLGLHSPFY). Residues 277–289 (KTTKMRIMSAPLR) are Cytoplasmic-facing. A helical transmembrane segment spans residues 290–310 (IGCIVISVSLLHLLDGWTFSP). The Lumenal segment spans residues 311–324 (ENHMTFYALSFGKS). A helical membrane pass occupies residues 325 to 345 (AVALLIPTTLVPWALSKIYPV). Residues 346–352 (KTEGKNL) are Cytoplasmic-facing. A Prevents secretion from ER motif is present at residues 349-352 (GKNL).

Belongs to the glucose-6-phosphatase family.

It is found in the endoplasmic reticulum membrane. It catalyses the reaction D-glucose 6-phosphate + H2O = D-glucose + phosphate. It functions in the pathway carbohydrate biosynthesis; gluconeogenesis. Functionally, hydrolyzes glucose-6-phosphate to glucose in the endoplasmic reticulum. Forms with the glucose-6-phosphate transporter (SLC37A4/G6PT) the complex responsible for glucose production in the terminal step of glycogenolysis and gluconeogenesis. Hence, it is the key enzyme in homeostatic regulation of blood glucose levels. The protein is Glucose-6-phosphatase catalytic subunit 1 (g6pc1) of Haplochromis nubilus (Blue Victoria mouthbrooder).